Reading from the N-terminus, the 484-residue chain is Protein nucleotidyltransferase YdiU (484 aa).

Positions 81, 83, 84, 103, 115, 116, 166, and 173 each coordinate ATP. Catalysis depends on Asp-244, which acts as the Proton acceptor. The Mg(2+) site is built by Asn-245 and Asp-254. Asp-254 lines the ATP pocket.

The protein belongs to the SELO family. The cofactor is Mg(2+). Mn(2+) serves as cofactor.

It carries out the reaction L-seryl-[protein] + ATP = 3-O-(5'-adenylyl)-L-seryl-[protein] + diphosphate. The catalysed reaction is L-threonyl-[protein] + ATP = 3-O-(5'-adenylyl)-L-threonyl-[protein] + diphosphate. It catalyses the reaction L-tyrosyl-[protein] + ATP = O-(5'-adenylyl)-L-tyrosyl-[protein] + diphosphate. The enzyme catalyses L-histidyl-[protein] + UTP = N(tele)-(5'-uridylyl)-L-histidyl-[protein] + diphosphate. It carries out the reaction L-seryl-[protein] + UTP = O-(5'-uridylyl)-L-seryl-[protein] + diphosphate. The catalysed reaction is L-tyrosyl-[protein] + UTP = O-(5'-uridylyl)-L-tyrosyl-[protein] + diphosphate. Nucleotidyltransferase involved in the post-translational modification of proteins. It can catalyze the addition of adenosine monophosphate (AMP) or uridine monophosphate (UMP) to a protein, resulting in modifications known as AMPylation and UMPylation. The chain is Protein nucleotidyltransferase YdiU from Shewanella sp. (strain MR-4).